The sequence spans 575 residues: Developmental and secondary metabolism regulator VEL1 (575 aa).

In terms of domain architecture, Velvet spans 21-225 (GRKLKYTLTV…AEQGCRVRIR (205 aa)). The Nuclear localization signal signature appears at 35 to 40 (ERARAC). 2 disordered regions span residues 36–56 (RARA…VDPP) and 227–402 (DVRM…QSYE). A compositionally biased stretch (basic and acidic residues) spans 274–284 (VHEDPQQRRGS). A compositionally biased stretch (polar residues) spans 294 to 308 (VVNTPFRTPSISPST). Over residues 334–346 (IQPPHPPPPPPSS) the composition is skewed to pro residues. Polar residues-rich tracts occupy residues 355 to 365 (HHNQGPSTQFR) and 385 to 402 (SYSQ…QSYE). A PEST region spans residues 465-509 (AEQPLAMSPLASVTSISRGTQNSAPMPSHNYNKLERSGSYSQYAP). The segment at 513 to 549 (EAPKSTNKRSFNDVFSTPTESLSNGRRPSAIGIDIEE) is disordered. Residues 516–538 (KSTNKRSFNDVFSTPTESLSNGR) show a composition bias toward polar residues.

This sequence belongs to the velvet family. VeA subfamily. In terms of assembly, component of the heterotrimeric velvet complex composed of LAE1, VEL1 and VEL2; VEL1 acting as a bridging protein between LAE1 and VEL2.

The protein localises to the nucleus. The protein resides in the cytoplasm. Its function is as follows. Component of the velvet transcription factor complex that controls sexual/asexual developmental ratio in response to light, promoting sexual development in the darkness while stimulating asexual sporulation under illumination. The velvet complex hat acts as a global regulator for secondary metabolite gene expression. Controls the expression of the oxalic acid and melanin gene clusters. Also controls the expression of proteases and carbohydrate-active enzymes. Involved in the resistance to oxidative stress. Required for full virulence. This Botryotinia fuckeliana (strain B05.10) (Noble rot fungus) protein is Developmental and secondary metabolism regulator VEL1.